A 617-amino-acid polypeptide reads, in one-letter code: Acetolactate synthase large subunit (617 aa).

Residue Glu-71 participates in thiamine diphosphate binding. FAD-binding positions include Arg-173, 281–302 (HGTAYANFAVTECDLLIAVGAR), and 324–343 (EIDPAEIGKNRKADVAVLGD). A thiamine pyrophosphate binding region spans residues 413 to 492 (QHQMWAAQHL…VKVVIVNNHW (80 aa)). Positions 463 and 490 each coordinate Mg(2+).

It belongs to the TPP enzyme family. Dimer of large and small chains. Mg(2+) serves as cofactor. Thiamine diphosphate is required as a cofactor.

The catalysed reaction is 2 pyruvate + H(+) = (2S)-2-acetolactate + CO2. Its pathway is amino-acid biosynthesis; L-isoleucine biosynthesis; L-isoleucine from 2-oxobutanoate: step 1/4. It participates in amino-acid biosynthesis; L-valine biosynthesis; L-valine from pyruvate: step 1/4. The chain is Acetolactate synthase large subunit (ilvB) from Parasynechococcus marenigrum (strain WH8102).